A 562-amino-acid chain; its full sequence is Protein wntless (562 aa).

The Cytoplasmic segment spans residues 1-13 (MSGTILENLSGRK). The helical transmembrane segment at 14–34 (LSILVATLLLCQVLCFLLGGL) threads the bilayer. Topologically, residues 35-239 (YAPLPAGHVT…AIHQNGGFTQ (205 aa)) are lumenal. The N-linked (GlcNAc...) asparagine glycan is linked to Asn58. A helical membrane pass occupies residues 240–260 (IWLLLKTMLFPFVVGIMIWFW). The Cytoplasmic portion of the chain corresponds to 261-270 (RRVHLLQRSP). The chain crosses the membrane as a helical span at residues 271 to 291 (ALLEYMLIYLGAALTFLNLPL). Residues 292 to 311 (EYLSLVYEMPYMLLLSDIRQ) are Lumenal-facing. The helical transmembrane segment at 312-332 (GIFYAMLLTFWLVFAGEHMLI) threads the bilayer. The Cytoplasmic segment spans residues 333 to 344 (QDAPNKSTIRSR). A helical transmembrane segment spans residues 345-365 (YWKHLSAVVVGCISLFVFDIC). The Lumenal segment spans residues 366–390 (ERGVQLRNPFYSIWTTPLGAKVAMT). A helical transmembrane segment spans residues 391–411 (FIVLAGVSAAIYFLFLCYMIW). The Cytoplasmic segment spans residues 412-441 (KVFRNIGDKRTSLPSMSQARRLHYEGLIYR). Residues 442-462 (FKFLMLATLVCAALTVAGFIM) traverse the membrane as a helical segment. Over 463–482 (GQMAEGQWDWNDNVAIQPTS) the chain is Lumenal. The chain crosses the membrane as a helical span at residues 483 to 503 (AFLTGVYGMWNIYIFALLILY). Over 504–562 (APSHKQWPAMHHSDETTQSNENIVASAASEEIEFSHLPSDSNPSEISSLTSFTRKVAFD) the chain is Cytoplasmic.

This sequence belongs to the wntless family. Interacts with wg; in the Golgi. Interacts with Vps35, a component of the retromer complex; wls stability is regulated by Vps35.

Its subcellular location is the presynaptic cell membrane. The protein localises to the postsynaptic cell membrane. It localises to the cell membrane. It is found in the endoplasmic reticulum membrane. The protein resides in the endosome membrane. Its subcellular location is the golgi apparatus membrane. In terms of biological role, a segment polarity gene required for wingless (wg)-dependent patterning processes, acting in both wg-sending cells and wg-target cells. In non-neuronal cells wls directs wg secretion. The wls traffic loop encompasses the Golgi, the cell surface, an endocytic compartment and a retrograde route leading back to the Golgi, and involves clathrin-mediated endocytosis and the retromer complex (a conserved protein complex consisting of Vps35 and Vps26). In neuronal cells (the larval motorneuron NMJ), the wg signal moves across the synapse via the release of wls-containing exosome-like vesicles. Postsynaptic wls is required for the trafficking of fz2 through the fz2-interacting protein Grip. The protein is Protein wntless of Drosophila sechellia (Fruit fly).